Here is a 264-residue protein sequence, read N- to C-terminus: S-adenosylmethionine decarboxylase proenzyme (264 aa).

Serine 113 functions as the Schiff-base intermediate with substrate; via pyruvic acid in the catalytic mechanism. A Pyruvic acid (Ser); by autocatalysis modification is found at serine 113. Histidine 118 (proton acceptor; for processing activity) is an active-site residue. Residue cysteine 141 is the Proton donor; for catalytic activity of the active site.

Belongs to the prokaryotic AdoMetDC family. Type 2 subfamily. Heterooctamer of four alpha and four beta chains arranged as a tetramer of alpha/beta heterodimers. Requires pyruvate as cofactor. In terms of processing, is synthesized initially as an inactive proenzyme. Formation of the active enzyme involves a self-maturation process in which the active site pyruvoyl group is generated from an internal serine residue via an autocatalytic post-translational modification. Two non-identical subunits are generated from the proenzyme in this reaction, and the pyruvate is formed at the N-terminus of the alpha chain, which is derived from the carboxyl end of the proenzyme. The post-translation cleavage follows an unusual pathway, termed non-hydrolytic serinolysis, in which the side chain hydroxyl group of the serine supplies its oxygen atom to form the C-terminus of the beta chain, while the remainder of the serine residue undergoes an oxidative deamination to produce ammonia and the pyruvoyl group blocking the N-terminus of the alpha chain.

It catalyses the reaction S-adenosyl-L-methionine + H(+) = S-adenosyl 3-(methylsulfanyl)propylamine + CO2. It functions in the pathway amine and polyamine biosynthesis; S-adenosylmethioninamine biosynthesis; S-adenosylmethioninamine from S-adenosyl-L-methionine: step 1/1. In terms of biological role, catalyzes the decarboxylation of S-adenosylmethionine to S-adenosylmethioninamine (dcAdoMet), the propylamine donor required for the synthesis of the polyamines spermine and spermidine from the diamine putrescine. This is S-adenosylmethionine decarboxylase proenzyme from Xylella fastidiosa (strain 9a5c).